The primary structure comprises 157 residues: Class 10 plant pathogenesis-related protein 2E (157 aa).

D8 is a binding site for trans-zeatin. Positions 32, 35, and 38 each coordinate Ca(2+). Residues E60, H69, Y81, and Y83 each coordinate trans-zeatin.

Belongs to the BetVI family.

It localises to the cytoplasm. It is found in the cytosol. Class II ribonuclease (RNase). Binds to cytokinins. Interacts with melatonin. This is Class 10 plant pathogenesis-related protein 2E from Lupinus luteus (European yellow lupine).